The following is a 127-amino-acid chain: Large ribosomal subunit protein bL12 (127 aa).

It belongs to the bacterial ribosomal protein bL12 family. As to quaternary structure, homodimer. Part of the ribosomal stalk of the 50S ribosomal subunit. Forms a multimeric L10(L12)X complex, where L10 forms an elongated spine to which 2 to 4 L12 dimers bind in a sequential fashion. Binds GTP-bound translation factors.

Functionally, forms part of the ribosomal stalk which helps the ribosome interact with GTP-bound translation factors. Is thus essential for accurate translation. This chain is Large ribosomal subunit protein bL12, found in Bordetella bronchiseptica (strain ATCC BAA-588 / NCTC 13252 / RB50) (Alcaligenes bronchisepticus).